We begin with the raw amino-acid sequence, 257 residues long: 5-keto-4-deoxy-D-glucarate aldolase (257 aa).

The Proton acceptor role is filled by His-51. Gln-152 lines the substrate pocket. Mg(2+) is bound at residue Glu-154. Residues Ser-179 and Asp-180 each contribute to the substrate site. Asp-180 lines the Mg(2+) pocket.

It belongs to the HpcH/HpaI aldolase family. KDGluc aldolase subfamily. As to quaternary structure, homohexamer; trimer of dimers. The cofactor is Mg(2+).

The enzyme catalyses 5-dehydro-4-deoxy-D-glucarate = 2-hydroxy-3-oxopropanoate + pyruvate. The catalysed reaction is 2-dehydro-3-deoxy-D-glucarate = 2-hydroxy-3-oxopropanoate + pyruvate. The protein operates within carbohydrate acid metabolism; galactarate degradation; D-glycerate from galactarate: step 2/3. In terms of biological role, catalyzes the reversible retro-aldol cleavage of both 5-keto-4-deoxy-D-glucarate and 2-keto-3-deoxy-D-glucarate to pyruvate and tartronic semialdehyde. The protein is 5-keto-4-deoxy-D-glucarate aldolase of Citrobacter koseri (strain ATCC BAA-895 / CDC 4225-83 / SGSC4696).